The chain runs to 443 residues: GTPase Der (443 aa).

2 consecutive EngA-type G domains span residues 3–168 and 178–353; these read PLLA…PEAP and VHLA…RNRS. GTP-binding positions include 9–16, 56–60, 120–123, 184–191, 231–235, and 296–299; these read GRPNVGKS, DTGGY, NKVE, DTAGL, and NKWD. In terms of domain architecture, KH-like spans 354–438; it reads QNVSTSQLNK…PISLRFLHKN (85 aa).

It belongs to the TRAFAC class TrmE-Era-EngA-EngB-Septin-like GTPase superfamily. EngA (Der) GTPase family. In terms of assembly, associates with the 50S ribosomal subunit.

In terms of biological role, GTPase that plays an essential role in the late steps of ribosome biogenesis. This is GTPase Der from Chlorobium chlorochromatii (strain CaD3).